The chain runs to 64 residues: Large ribosomal subunit protein bL33 (64 aa).

The protein belongs to the bacterial ribosomal protein bL33 family.

The polypeptide is Large ribosomal subunit protein bL33 (Gloeothece citriformis (strain PCC 7424) (Cyanothece sp. (strain PCC 7424))).